A 449-amino-acid chain; its full sequence is MKLLNKIKNENAIEFQILIEKSEWEKKHKESFEKIAKKTASKLKIPGFRPGKVPVEEAKKHVNEIEVFETTTNDLIPQVLTFLEQDESFINDDSETVDTPSVDILDFKDGELSLKVVYDLYPVATIESYNDLILTPIVNEAFEHEVNAEIEHALNSKSQRRVKDDNEFIEKGDEVRFDFKGMIDSVPFEGGSAKDHLLTIGSNQFIPGFEDQMIGLKKDERKNINVKFPDDYHATDLAGKAAVFEVFIKEITNVKPQELNDEFAKSFNLPNVNTVQELKDYIHNQIVLAKQEKNSERAWLEIAQQLLAKAKITPIPQSLIDREVSTLRQQVLSQLSQYKIELKQYLEFSKKSEAQFQEDLIRQAKETITLALLVDDIAETQNIVVSDEEVKERVAEMAKLYQGEEQAVIEQLSKNPDAVKEFLLHKKVVNYLIDLNKNNQPKNTTLSSK.

Residues 172–257 form the PPIase FKBP-type domain; that stretch reads GDEVRFDFKG…IKEITNVKPQ (86 aa).

It belongs to the FKBP-type PPIase family. Tig subfamily.

The protein resides in the cytoplasm. It catalyses the reaction [protein]-peptidylproline (omega=180) = [protein]-peptidylproline (omega=0). Its function is as follows. Involved in protein export. Acts as a chaperone by maintaining the newly synthesized protein in an open conformation. Functions as a peptidyl-prolyl cis-trans isomerase. In Ureaplasma parvum serovar 3 (strain ATCC 27815 / 27 / NCTC 11736), this protein is Trigger factor.